The following is a 142-amino-acid chain: ATP synthase epsilon chain (142 aa).

This sequence belongs to the ATPase epsilon chain family. In terms of assembly, F-type ATPases have 2 components, CF(1) - the catalytic core - and CF(0) - the membrane proton channel. CF(1) has five subunits: alpha(3), beta(3), gamma(1), delta(1), epsilon(1). CF(0) has three main subunits: a, b and c.

The protein localises to the cell inner membrane. Functionally, produces ATP from ADP in the presence of a proton gradient across the membrane. This is ATP synthase epsilon chain from Pasteurella multocida (strain Pm70).